Here is a 164-residue protein sequence, read N- to C-terminus: Large ribosomal subunit protein uL10 (164 aa).

This sequence belongs to the universal ribosomal protein uL10 family. Part of the ribosomal stalk of the 50S ribosomal subunit. The N-terminus interacts with L11 and the large rRNA to form the base of the stalk. The C-terminus forms an elongated spine to which L12 dimers bind in a sequential fashion forming a multimeric L10(L12)X complex.

In terms of biological role, forms part of the ribosomal stalk, playing a central role in the interaction of the ribosome with GTP-bound translation factors. The sequence is that of Large ribosomal subunit protein uL10 (rplJ) from Helicobacter pylori (strain ATCC 700392 / 26695) (Campylobacter pylori).